The following is a 264-amino-acid chain: Ribosomal protein L11 methyltransferase (264 aa).

4 residues coordinate S-adenosyl-L-methionine: threonine 116, glycine 137, aspartate 159, and asparagine 200.

It belongs to the methyltransferase superfamily. PrmA family.

The protein resides in the cytoplasm. The catalysed reaction is L-lysyl-[protein] + 3 S-adenosyl-L-methionine = N(6),N(6),N(6)-trimethyl-L-lysyl-[protein] + 3 S-adenosyl-L-homocysteine + 3 H(+). Methylates ribosomal protein L11. The protein is Ribosomal protein L11 methyltransferase of Thermotoga petrophila (strain ATCC BAA-488 / DSM 13995 / JCM 10881 / RKU-1).